The following is a 224-amino-acid chain: UPF0758 protein AFE_0358 (224 aa).

In terms of domain architecture, MPN spans 102-224 (GLDSPLRVRQ…PLSLREQGGW (123 aa)). Residues histidine 173, histidine 175, and aspartate 186 each contribute to the Zn(2+) site. Residues 173–186 (HNHPSGVAEPSAAD) carry the JAMM motif motif.

It belongs to the UPF0758 family.

In Acidithiobacillus ferrooxidans (strain ATCC 23270 / DSM 14882 / CIP 104768 / NCIMB 8455) (Ferrobacillus ferrooxidans (strain ATCC 23270)), this protein is UPF0758 protein AFE_0358.